The following is a 332-amino-acid chain: Anthranilate phosphoribosyltransferase (332 aa).

5-phospho-alpha-D-ribose 1-diphosphate contacts are provided by residues Gly79, 82 to 83 (GD), Thr87, 89 to 92 (NIST), 107 to 115 (KHGNYGATS), and Ala119. Anthranilate is bound at residue Gly79. Ser91 provides a ligand contact to Mg(2+). Residue Asn110 participates in anthranilate binding. Arg165 lines the anthranilate pocket. Asp223 and Glu224 together coordinate Mg(2+).

It belongs to the anthranilate phosphoribosyltransferase family. In terms of assembly, homodimer. The cofactor is Mg(2+).

The catalysed reaction is N-(5-phospho-beta-D-ribosyl)anthranilate + diphosphate = 5-phospho-alpha-D-ribose 1-diphosphate + anthranilate. The protein operates within amino-acid biosynthesis; L-tryptophan biosynthesis; L-tryptophan from chorismate: step 2/5. Catalyzes the transfer of the phosphoribosyl group of 5-phosphorylribose-1-pyrophosphate (PRPP) to anthranilate to yield N-(5'-phosphoribosyl)-anthranilate (PRA). The protein is Anthranilate phosphoribosyltransferase of Bacteroides thetaiotaomicron (strain ATCC 29148 / DSM 2079 / JCM 5827 / CCUG 10774 / NCTC 10582 / VPI-5482 / E50).